Consider the following 105-residue polypeptide: Heat shock protein HspQ (105 aa).

The segment at 75-105 (GEAQEAHPEQPSLDELAESIRHQLQAPRLRN) is disordered.

Belongs to the HspQ family.

It localises to the cytoplasm. Involved in the degradation of certain denaturated proteins, including DnaA, during heat shock stress. The polypeptide is Heat shock protein HspQ (Serratia proteamaculans (strain 568)).